The following is a 252-amino-acid chain: F-box protein At5g39250 (252 aa).

An F-box domain is found at 1–42 (MFSEEVLKNVFPLLEGEDLASCMGVCKQWRDIARDDFYWKCQ).

The sequence is that of F-box protein At5g39250 from Arabidopsis thaliana (Mouse-ear cress).